We begin with the raw amino-acid sequence, 318 residues long: Malate dehydrogenase (318 aa).

Residues 10 to 15 (GGGQIG) and aspartate 34 contribute to the NAD(+) site. The substrate site is built by arginine 83 and arginine 89. Residues asparagine 96 and 119–121 (LSN) each bind NAD(+). Substrate is bound by residues asparagine 121 and arginine 152. Histidine 176 serves as the catalytic Proton acceptor.

The protein belongs to the LDH/MDH superfamily. MDH type 3 family.

The enzyme catalyses (S)-malate + NAD(+) = oxaloacetate + NADH + H(+). Its function is as follows. Catalyzes the reversible oxidation of malate to oxaloacetate. The sequence is that of Malate dehydrogenase from Syntrophotalea carbinolica (strain DSM 2380 / NBRC 103641 / GraBd1) (Pelobacter carbinolicus).